The chain runs to 110 residues: Protein NATD1 (110 aa).

The region spanning 19-109 (EHDRKRRQFT…PLPQYLEHLQ (91 aa)) is the N-acetyltransferase domain.

Belongs to the NATD1 family.

This Gallus gallus (Chicken) protein is Protein NATD1 (NATD1).